The sequence spans 226 residues: MAAPAPVTRQVSGAAALVPAPSGPDSGQPLAAAVAELPVLDARGQRVPFGALFRERRAVVVFVRHFLCYICKEYVEDLAKIPRSFLQEANVTLIVIGQSSYHHIEPFCKLTGYSHEIYVDPEREIYKRLGMKRGEEIASSGQSPHIKSNLLSGSLQSLWRAVTGPLFDFQGDPAQQGGTLILGPGNNIHFIHRDRNRLDHKPINSVLQLVGVQHVNFTNRPSVIHV.

It belongs to the peroxiredoxin-like PRXL2 family. PRXL2C subfamily. As to expression, expressed in gastric tissues.

Its function is as follows. May positively regulate ERK1/2 signaling and AKT1 activation leading to HIF1A up-regulation with an increased expression of glycolysis genes and enhanced glycolysis. The sequence is that of Peroxiredoxin-like 2C from Homo sapiens (Human).